Here is a 294-residue protein sequence, read N- to C-terminus: 4-diphosphocytidyl-2-C-methyl-D-erythritol kinase (294 aa).

Lysine 19 is a catalytic residue. Proline 106–alanine 116 is a binding site for ATP. Aspartate 148 is a catalytic residue.

It belongs to the GHMP kinase family. IspE subfamily.

The enzyme catalyses 4-CDP-2-C-methyl-D-erythritol + ATP = 4-CDP-2-C-methyl-D-erythritol 2-phosphate + ADP + H(+). The protein operates within isoprenoid biosynthesis; isopentenyl diphosphate biosynthesis via DXP pathway; isopentenyl diphosphate from 1-deoxy-D-xylulose 5-phosphate: step 3/6. In terms of biological role, catalyzes the phosphorylation of the position 2 hydroxy group of 4-diphosphocytidyl-2C-methyl-D-erythritol. This chain is 4-diphosphocytidyl-2-C-methyl-D-erythritol kinase, found in Rhizobium etli (strain ATCC 51251 / DSM 11541 / JCM 21823 / NBRC 15573 / CFN 42).